We begin with the raw amino-acid sequence, 187 residues long: uncharacterized protein (187 aa).

Residues threonine 6–phenylalanine 66 form the HTH tetR-type domain. Residues serine 29–phenylalanine 48 constitute a DNA-binding region (H-T-H motif).

This is an uncharacterized protein from Haemophilus influenzae (strain ATCC 51907 / DSM 11121 / KW20 / Rd).